Here is a 619-residue protein sequence, read N- to C-terminus: 1-deoxy-D-xylulose-5-phosphate synthase (619 aa).

Residues His76 and 117-119 (AHS) each bind thiamine diphosphate. Position 148 (Asp148) interacts with Mg(2+). Thiamine diphosphate contacts are provided by residues 149-150 (GA), Asn177, Tyr284, and Glu366. Asn177 lines the Mg(2+) pocket.

It belongs to the transketolase family. DXPS subfamily. As to quaternary structure, homodimer. Requires Mg(2+) as cofactor. The cofactor is thiamine diphosphate.

It catalyses the reaction D-glyceraldehyde 3-phosphate + pyruvate + H(+) = 1-deoxy-D-xylulose 5-phosphate + CO2. Its pathway is metabolic intermediate biosynthesis; 1-deoxy-D-xylulose 5-phosphate biosynthesis; 1-deoxy-D-xylulose 5-phosphate from D-glyceraldehyde 3-phosphate and pyruvate: step 1/1. Its function is as follows. Catalyzes the acyloin condensation reaction between C atoms 2 and 3 of pyruvate and glyceraldehyde 3-phosphate to yield 1-deoxy-D-xylulose-5-phosphate (DXP). This is 1-deoxy-D-xylulose-5-phosphate synthase from Azoarcus sp. (strain BH72).